We begin with the raw amino-acid sequence, 220 residues long: Peptide methionine sulfoxide reductase MsrA (220 aa).

Residue C54 is part of the active site.

This sequence belongs to the MsrA Met sulfoxide reductase family.

The enzyme catalyses L-methionyl-[protein] + [thioredoxin]-disulfide + H2O = L-methionyl-(S)-S-oxide-[protein] + [thioredoxin]-dithiol. The catalysed reaction is [thioredoxin]-disulfide + L-methionine + H2O = L-methionine (S)-S-oxide + [thioredoxin]-dithiol. Functionally, has an important function as a repair enzyme for proteins that have been inactivated by oxidation. Catalyzes the reversible oxidation-reduction of methionine sulfoxide in proteins to methionine. In Salinispora arenicola (strain CNS-205), this protein is Peptide methionine sulfoxide reductase MsrA.